The primary structure comprises 329 residues: Acetyl-coenzyme A carboxylase carboxyl transferase subunit alpha (329 aa).

The region spanning 40–294 (QLETLAARRR…REAIERHLDD (255 aa)) is the CoA carboxyltransferase C-terminal domain.

This sequence belongs to the AccA family. In terms of assembly, acetyl-CoA carboxylase is a heterohexamer composed of biotin carboxyl carrier protein (AccB), biotin carboxylase (AccC) and two subunits each of ACCase subunit alpha (AccA) and ACCase subunit beta (AccD).

It is found in the cytoplasm. The enzyme catalyses N(6)-carboxybiotinyl-L-lysyl-[protein] + acetyl-CoA = N(6)-biotinyl-L-lysyl-[protein] + malonyl-CoA. The protein operates within lipid metabolism; malonyl-CoA biosynthesis; malonyl-CoA from acetyl-CoA: step 1/1. Functionally, component of the acetyl coenzyme A carboxylase (ACC) complex. First, biotin carboxylase catalyzes the carboxylation of biotin on its carrier protein (BCCP) and then the CO(2) group is transferred by the carboxyltransferase to acetyl-CoA to form malonyl-CoA. This chain is Acetyl-coenzyme A carboxylase carboxyl transferase subunit alpha, found in Prochlorococcus marinus (strain MIT 9303).